The chain runs to 334 residues: Tryptophan--tRNA ligase (334 aa).

ATP is bound by residues glutamine 12–serine 14 and glycine 20–asparagine 21. A 'HIGH' region motif is present at residues proline 13 to asparagine 21. Aspartate 136 contributes to the L-tryptophan binding site. Residues glycine 148–aspartate 150, isoleucine 187, and lysine 196–serine 200 contribute to the ATP site. Residues lysine 196–serine 200 carry the 'KMSKS' region motif.

Belongs to the class-I aminoacyl-tRNA synthetase family. As to quaternary structure, homodimer.

Its subcellular location is the cytoplasm. It catalyses the reaction tRNA(Trp) + L-tryptophan + ATP = L-tryptophyl-tRNA(Trp) + AMP + diphosphate + H(+). Functionally, catalyzes the attachment of tryptophan to tRNA(Trp). This chain is Tryptophan--tRNA ligase, found in Wigglesworthia glossinidia brevipalpis.